The sequence spans 163 residues: Pheromone-binding protein (163 aa).

The N-terminal stretch at 1–22 (MMSVRLMLVVAVWLCLRVDASQ) is a signal peptide. 3 cysteine pairs are disulfide-bonded: Cys-39–Cys-74, Cys-70–Cys-129, and Cys-117–Cys-138.

It belongs to the PBP/GOBP family. In terms of tissue distribution, antenna.

In terms of biological role, this major soluble protein in olfactory sensilla of male moths might serve to solubilize the extremely hydrophobic pheromone molecules and to transport pheromone through the aqueous lymph to receptors located on olfactory cilia. In Heliothis virescens (Tobacco budworm moth), this protein is Pheromone-binding protein.